Consider the following 355-residue polypeptide: Phosphatidylinositol:ceramide inositolphosphotransferase (355 aa).

The Cytoplasmic portion of the chain corresponds to 1-44 (MISYPFFSLSPPGLVPPPMAVPPVEMYSGSFWNRMRKPLPLRTQ). The chain crosses the membrane as a helical span at residues 45–65 (VIRFTVVFVIVSFILAVALQI). Residues 66–89 (THERMPDPKVTKPLPDLGFELLTK) lie on the Extracellular side of the membrane. The helical transmembrane segment at 90 to 110 (ISFLSVVTDVLIAFLSSLSFF) threads the bilayer. Residues 111–165 (TLWKLYLLHRHCVGSGEPELPCNIPGVSRFFLSVWLCKENCRIELRNVHTIAWIR) lie on the Cytoplasmic side of the membrane. The helical transmembrane segment at 166–186 (FITSYALLLLFRSLVIVMTSM) threads the bilayer. At 187–205 (PTPVDKCQNPPKIENPVKN) the chain is on the extracellular side. Residues 206 to 226 (VILTVLTAGGGSIHCGDLMYS) traverse the membrane as a helical segment. Topologically, residues 227-251 (GHTVILTLHLMFHWIYGAMVHWSFR) are cytoplasmic. Catalysis depends on residues His-228, His-271, and Asp-275. Residues 252–272 (PVVTVVAIFGYYCIVASRSHY) traverse the membrane as a helical segment. At 273–275 (TDD) the chain is on the extracellular side. Residues 276-296 (VLVAIYLTIATFIAVGHNADG) traverse the membrane as a helical segment. The Cytoplasmic segment spans residues 297 to 355 (APWQLQLFIRWLPCCGANSREVTEDSQPVMVAFKSEAVDELRERDDSAGLSCEVSTNEV).

The protein belongs to the sphingomyelin synthase family.

It localises to the membrane. Bidirectional lipid inositolphosphotransferase capable of converting phosphatidylinositol (PI) and ceramide to inositol-phosphorylceramide (IPC) and diacylglycerol (DAG) and vice versa. Direction is dependent on the relative concentrations of DAG and ceramide as phosphoinositol acceptors. Does not function strictly as a SM synthase. Essential for viability of the pathogenic bloodstream stage of this human protozoan parasite and, consequently, can be considered as potential drug target. This chain is Phosphatidylinositol:ceramide inositolphosphotransferase, found in Trypanosoma brucei brucei (strain 927/4 GUTat10.1).